The chain runs to 338 residues: Fructose-1,6-bisphosphatase class 1 (338 aa).

4 residues coordinate Mg(2+): E92, D114, L116, and D117. Substrate is bound by residues 117-120 and N210; that span reads DGSS. Mg(2+) is bound at residue E284.

Belongs to the FBPase class 1 family. As to quaternary structure, homotetramer. Mg(2+) is required as a cofactor.

It is found in the cytoplasm. The enzyme catalyses beta-D-fructose 1,6-bisphosphate + H2O = beta-D-fructose 6-phosphate + phosphate. Its pathway is carbohydrate biosynthesis; gluconeogenesis. The sequence is that of Fructose-1,6-bisphosphatase class 1 from Halorhodospira halophila (strain DSM 244 / SL1) (Ectothiorhodospira halophila (strain DSM 244 / SL1)).